Consider the following 46-residue polypeptide: MSGKSWVLISTTSPQSLEDEILGRLLKILFVLFVDLMSIMYVVITS.

The Cytoplasmic portion of the chain corresponds to 1 to 21 (MSGKSWVLISTTSPQSLEDEI). A helical transmembrane segment spans residues 22 to 42 (LGRLLKILFVLFVDLMSIMYV). Residues 43–46 (VITS) lie on the Lumenal side of the membrane.

In terms of assembly, homooligomer. Monomer. Interacts with ATP2A1/SERCA1. Interacts as a monomer with ATP2A2/SERCA2; the interaction inhibits ATP2A2 activity. As to expression, specifically expressed in all skeletal muscles. Detected in both fast- and slow-type skeletal muscle. Not expressed in cardiac or smooth muscles.

The protein localises to the sarcoplasmic reticulum membrane. Its function is as follows. Inhibits the activity of ATP2A1/SERCA1 ATPase in sarcoplasmic reticulum by decreasing the apparent affinity of the ATPase for Ca(2+), thereby acting as a key regulator of skeletal muscle activity. Its high expression in adult skeletal muscle, suggests that it constitutes the predominant regulator of ATP2A1/SERCA1 in adult skeletal muscle. Also inhibits the activity of ATP2A2/SERCA2 and ATP2A3/SERCA3. The protein is Myoregulin of Mus musculus (Mouse).